The following is a 193-amino-acid chain: Ribosomal RNA small subunit methyltransferase G (193 aa).

S-adenosyl-L-methionine is bound by residues Gly-62, Phe-67, Ile-111–Glu-112, and Arg-125.

It belongs to the methyltransferase superfamily. RNA methyltransferase RsmG family.

Its subcellular location is the cytoplasm. It carries out the reaction guanosine(527) in 16S rRNA + S-adenosyl-L-methionine = N(7)-methylguanosine(527) in 16S rRNA + S-adenosyl-L-homocysteine. Functionally, specifically methylates the N7 position of guanine in position 527 of 16S rRNA. The sequence is that of Ribosomal RNA small subunit methyltransferase G from Gluconobacter oxydans (strain 621H) (Gluconobacter suboxydans).